The sequence spans 288 residues: Elongation factor Ts (288 aa).

The segment at 80–83 (TDFV) is involved in Mg(2+) ion dislocation from EF-Tu.

The protein belongs to the EF-Ts family.

The protein localises to the cytoplasm. Associates with the EF-Tu.GDP complex and induces the exchange of GDP to GTP. It remains bound to the aminoacyl-tRNA.EF-Tu.GTP complex up to the GTP hydrolysis stage on the ribosome. The sequence is that of Elongation factor Ts from Chromobacterium violaceum (strain ATCC 12472 / DSM 30191 / JCM 1249 / CCUG 213 / NBRC 12614 / NCIMB 9131 / NCTC 9757 / MK).